The chain runs to 610 residues: Probable pleckstrin homology domain-containing family N member 1 (610 aa).

Positions 1 to 30 (MGNSHCVPQAPRRLRASFSRKPSLKGNRED) are disordered. G2 is lipidated: N-myristoyl glycine. Residues 61 to 100 (TDIPGPEHHPENLEQPFLSVFKKGWRRTPVRNLGKVVHYS) form an interaction with C1QBP region. PH domains follow at residues 96–192 (VVHY…MALL) and 227–324 (AICA…SRRD). The residue at position 307 (Y307) is a Phosphotyrosine. Disordered stretches follow at residues 327-357 (HLPP…SNGR), 371-431 (QSLP…PLPL), 443-473 (LDSG…ATSR), and 493-610 (PGPD…IQWI). 2 stretches are compositionally biased toward polar residues: residues 371-380 (QSLPESSVPT) and 391-402 (NQTDSNCVSTGQ). At Y462 the chain carries Phosphotyrosine. Residues 504 to 526 (VSVSVPVSESSSGISSSPGPLGS) are compositionally biased toward low complexity.

As to quaternary structure, found in a complex with cytochrome c mRNA and various ribosomal proteins. Interacts with C1QBP, ELAVL1 and BID. In terms of processing, phosphorylation is essential for its mitochondrial localization and regulates its interaction with C1QBP. In terms of tissue distribution, testis and adipose tissue (at protein level). Ubiquitous.

It is found in the cell membrane. Its subcellular location is the mitochondrion membrane. It localises to the mitochondrion. Its function is as follows. Controls the stability of the leptin mRNA harboring an AU-rich element (ARE) in its 3' UTR, in cooperation with the RNA stabilizer ELAVL1. Decreases the stability of the leptin mRNA by antagonizing the function of ELAVL1 by inducing its atypical recruitment from the nucleus to the cytosol. Binds to cardiolipin (CL), phosphatidic acid (PA), phosphatidylinositol 4-phosphate (PtdIns(4)P) and phosphatidylserine (PS). The polypeptide is Probable pleckstrin homology domain-containing family N member 1 (Plekhn1) (Mus musculus (Mouse)).